The sequence spans 461 residues: Bifunctional protein GlmU (461 aa).

A pyrophosphorylase region spans residues 1 to 230 (MECLMAVILA…SSEILGINDR (230 aa)). UDP-N-acetyl-alpha-D-glucosamine is bound by residues 9 to 12 (LAAG), K23, Q73, 78 to 79 (GT), 101 to 103 (YGD), G140, E155, N170, and N228. D103 contacts Mg(2+). N228 serves as a coordination point for Mg(2+). Positions 231-251 (VQLAEAGRIIRSRILKRHMKN) are linker. The tract at residues 252-461 (GVTIIDPDST…KKGMLRQEKE (210 aa)) is N-acetyltransferase. Residues R333 and K351 each coordinate UDP-N-acetyl-alpha-D-glucosamine. The Proton acceptor role is filled by H363. The UDP-N-acetyl-alpha-D-glucosamine site is built by Y366 and N377. Acetyl-CoA is bound by residues 386-387 (NY), A423, and R440.

In the N-terminal section; belongs to the N-acetylglucosamine-1-phosphate uridyltransferase family. The protein in the C-terminal section; belongs to the transferase hexapeptide repeat family. Homotrimer. Mg(2+) is required as a cofactor.

The protein resides in the cytoplasm. The enzyme catalyses alpha-D-glucosamine 1-phosphate + acetyl-CoA = N-acetyl-alpha-D-glucosamine 1-phosphate + CoA + H(+). The catalysed reaction is N-acetyl-alpha-D-glucosamine 1-phosphate + UTP + H(+) = UDP-N-acetyl-alpha-D-glucosamine + diphosphate. It participates in nucleotide-sugar biosynthesis; UDP-N-acetyl-alpha-D-glucosamine biosynthesis; N-acetyl-alpha-D-glucosamine 1-phosphate from alpha-D-glucosamine 6-phosphate (route II): step 2/2. The protein operates within nucleotide-sugar biosynthesis; UDP-N-acetyl-alpha-D-glucosamine biosynthesis; UDP-N-acetyl-alpha-D-glucosamine from N-acetyl-alpha-D-glucosamine 1-phosphate: step 1/1. Its pathway is bacterial outer membrane biogenesis; LPS lipid A biosynthesis. Catalyzes the last two sequential reactions in the de novo biosynthetic pathway for UDP-N-acetylglucosamine (UDP-GlcNAc). The C-terminal domain catalyzes the transfer of acetyl group from acetyl coenzyme A to glucosamine-1-phosphate (GlcN-1-P) to produce N-acetylglucosamine-1-phosphate (GlcNAc-1-P), which is converted into UDP-GlcNAc by the transfer of uridine 5-monophosphate (from uridine 5-triphosphate), a reaction catalyzed by the N-terminal domain. This Acetivibrio thermocellus (strain ATCC 27405 / DSM 1237 / JCM 9322 / NBRC 103400 / NCIMB 10682 / NRRL B-4536 / VPI 7372) (Clostridium thermocellum) protein is Bifunctional protein GlmU.